Reading from the N-terminus, the 754-residue chain is Nitrate reductase (754 aa).

Residues 1–31 (MKFTRRSFVKASALATAMVAAGCSPQPVAPK) constitute a signal peptide (tat-type signal). The region spanning 39–95 (ATWYKTVCRYCGVGCGVMVAAKDNRVVAVKGDTENPVNKGLLCVKGYYLDRIMNTEE) is the 4Fe-4S Mo/W bis-MGD-type domain. Residues cysteine 46, cysteine 49, cysteine 53, and cysteine 81 each contribute to the [4Fe-4S] cluster site. Residues lysine 83, glutamine 144, asparagine 169, cysteine 173, 256–258 (GTD), methionine 341, glutamine 345, asparagine 451, lysine 497, aspartate 524, 642–651 (TGRILEHWHT), asparagine 728, and lysine 745 contribute to the Mo-bis(molybdopterin guanine dinucleotide) site.

The protein belongs to the prokaryotic molybdopterin-containing oxidoreductase family. NasA/NapA/NarB subfamily. Component of the nitrate reductase NapAB complex composed of NapA and NapB. [4Fe-4S] cluster is required as a cofactor. It depends on Mo-bis(molybdopterin guanine dinucleotide) as a cofactor. Predicted to be exported by the Tat system. The position of the signal peptide cleavage has not been experimentally proven.

It is found in the secreted. The enzyme catalyses 2 Fe(II)-[cytochrome] + nitrate + 2 H(+) = 2 Fe(III)-[cytochrome] + nitrite + H2O. Catalytic subunit of the nitrate reductase complex NapAB. Receives electrons from NapB and catalyzes the reduction of nitrate to nitrite. The protein is Nitrate reductase of Symbiobacterium thermophilum (strain DSM 24528 / JCM 14929 / IAM 14863 / T).